Here is a 1118-residue protein sequence, read N- to C-terminus: DNA mismatch repair protein MSH1, mitochondrial (1118 aa).

Gly-768–Ser-775 lines the ATP pocket.

This sequence belongs to the DNA mismatch repair MutS family.

It is found in the mitochondrion. The protein resides in the plastid. Its subcellular location is the chloroplast. In terms of biological role, DNA mismatch repair protein specifically involved in maintenance of mitochondrial genome configuration by controlling specific rearranged portion. Functions by suppressing asymmetric recombination at some repeat pairs. This chain is DNA mismatch repair protein MSH1, mitochondrial (MSH1), found in Arabidopsis thaliana (Mouse-ear cress).